The sequence spans 155 residues: MTNIHYLPELEDSYSALNSDQIEILRQQVLNEGGEISSIQSRFNYAWGLVRSTNKEDQMLGVKLLTDIYKESPMRRRECLYYLTIGCYKLGEYSTAKRYVDALVHHEPENKQALMLQTAVENKITSQGLKGIALISAGIAIGATTIGLLIRGRRR.

Over 1 to 130 the chain is Cytoplasmic; the sequence is MTNIHYLPEL…ENKITSQGLK (130 aa). The stretch at 77 to 110 is one TPR repeat; it reads RECLYYLTIGCYKLGEYSTAKRYVDALVHHEPEN. Residues 131-150 traverse the membrane as a helical segment; it reads GIALISAGIAIGATTIGLLI. Topologically, residues 151–155 are mitochondrial intermembrane; it reads RGRRR.

The protein belongs to the FIS1 family.

Its subcellular location is the mitochondrion outer membrane. Its function is as follows. Has a role in mitochondrial fission. Has a role in outer membrane fission but not matrix separation. In Kluyveromyces lactis (strain ATCC 8585 / CBS 2359 / DSM 70799 / NBRC 1267 / NRRL Y-1140 / WM37) (Yeast), this protein is Mitochondrial fission 1 protein (FIS1).